Here is a 94-residue protein sequence, read N- to C-terminus: Large ribosomal subunit protein bL27 (94 aa).

A propeptide spanning residues 1-9 (MLRLDLQFF) is cleaved from the precursor.

This sequence belongs to the bacterial ribosomal protein bL27 family. The N-terminus is cleaved by ribosomal processing cysteine protease Prp.

This is Large ribosomal subunit protein bL27 from Bacillus pumilus (strain SAFR-032).